The chain runs to 410 residues: Transcription factor PHYTOCHROME INTERACTING FACTOR-LIKE 13 (410 aa).

Residues 82–92 are compositionally biased toward low complexity; the sequence is AAAAAGPSSHH. Disordered stretches follow at residues 82–110 and 137–225; these read AAAAAGPSSHHAPPPDLPPPAARPPMRSG and CRDA…AEVH. The segment covering 93–104 has biased composition (pro residues); sequence APPPDLPPPAAR. The span at 187–197 shows a compositional bias: basic and acidic residues; that stretch reads GREDSDSRSED. Basic residues predominate over residues 209–219; it reads SSRRYGSKRRT. Residues 220–233 are basic motif; sequence RAAEVHNLSERRRR. Positions 220–269 constitute a bHLH domain; that stretch reads RAAEVHNLSERRRRDRINEKMRALQELIPHCNKTDKASILDEAIEYLKSL. Residues 234–269 are helix-loop-helix motif; it reads DRINEKMRALQELIPHCNKTDKASILDEAIEYLKSL. Residues 357–410 form a disordered region; the sequence is PFLHPDGWQTVPPQVSGPYASGPQVAQQNQIPKASASTVLPNSGAEQPPTSDGI. The span at 380–410 shows a compositional bias: polar residues; that stretch reads QVAQQNQIPKASASTVLPNSGAEQPPTSDGI.

Belongs to the bHLH protein family. Interacts with PRR1. Interacts with LF. As to expression, highly expressed in the node portions of the stem. Expressed in the leaves and the basal part of shoots.

Its subcellular location is the nucleus. Functionally, transcription factor that may act as negative regulator of phyB-dependent light signal transduction. Transcription activator that acts as a positive regulator of internode elongation. May function via regulation of cell wall-related genes. May play a role in a drought-associated growth-restriction mechanism in response to drought stress. This chain is Transcription factor PHYTOCHROME INTERACTING FACTOR-LIKE 13, found in Oryza sativa subsp. japonica (Rice).